Consider the following 884-residue polypeptide: Pyruvate, phosphate dikinase (884 aa).

The tract at residues 1 to 351 (MSTRRVYFFG…LWMLQARAGK (351 aa)) is N-terminal. R99 contacts ATP. Residues 352 to 408 (RTGFAMVRIAIDMCKEGMLTEEEALLRIDANKINEFLFKRFDPSVKPVVLGKGIPAS) are linker 1. The interval 409–507 (PGAAVGVICF…KFKEGDFISI (99 aa)) is central. T462 is modified (phosphothreonine; by PDRP1). The active-site Tele-phosphohistidine intermediate is the H464. The interval 508 to 542 (NGTTGEIYNGAVQTIEPGITDDLQTIMDWSDKYRV) is linker 2. Residues 543–884 (LKIRTNADTP…IAAIKARTNQ (342 aa)) form a C-terminal region. The substrate site is built by R570, R626, E753, G774, T775, N776, and D777. E753 is a Mg(2+) binding site. A Mg(2+)-binding site is contributed by D777. C839 functions as the Proton donor in the catalytic mechanism.

The protein belongs to the PEP-utilizing enzyme family. In terms of assembly, homodimer. Mg(2+) is required as a cofactor. Phosphorylation of Thr-462 in the dark inactivates the enzyme. Dephosphorylation upon light stimulation reactivates the enzyme.

It catalyses the reaction pyruvate + phosphate + ATP = phosphoenolpyruvate + AMP + diphosphate + H(+). Activated by light-induced dephosphorylation. Inhibited by dark-induced phosphorylation. Both reactions are catalyzed by PDRP1. Its function is as follows. Catalyzes the reversible phosphorylation of pyruvate and phosphate. This chain is Pyruvate, phosphate dikinase, found in Giardia intestinalis (Giardia lamblia).